The following is a 195-amino-acid chain: MGNIFGRWPGARKAIEDLHNTSSEPVGQASQDLQNKGGLTTNTLGTSADVLEYSADHTEEEVGFPVRPAVPMRPMTEKLAIDLSWFLKEKGGLDGLFFSPKRAAILDTWMYNTQGVFPDWQNYTPGPGIRYPLCRGWLFKLVPVDPPEDDEKNILLHPACSHGTTDPDGETLIWRFDSSLARRHIARERYPEYFK.

G2 carries N-myristoyl glycine; by host lipidation. An N-terminal; associates with the host plasma membrane region spans residues 2-53 (GNIFGRWPGARKAIEDLHNTSSEPVGQASQDLQNKGGLTTNTLGTSADVLEY). Residues 7 to 22 (RWPGARKAIEDLHNTS) form a necessary for MHC-I internalization region. Positions 59-61 (EEE) are acidic. An SH3-binding region spans residues 65–74 (PVRPAVPMRP). The tract at residues 65–74 (PVRPAVPMRP) is SH3-binding; interaction with Src family tyrosine kinases. The short motif at 68–71 (PAVP) is the PxxP element. Residues 104–120 (AILDTWMYNTQGVFPDW) form a mediates dimerization region. Positions 144-171 (VDPPEDDEKNILLHPACSHGTTDPDGET) are binding to ATP6V1H. The short motif at 155–156 (LL) is the Di-leucine internalization motif; necessary for CD4 internalization element.

This sequence belongs to the lentivirus primate group Nef protein family. Homodimer.

The protein localises to the host cell membrane. The protein resides in the host cytoplasm. It localises to the host perinuclear region. It is found in the virion. Its subcellular location is the secreted. Its function is as follows. Factor of infectivity and pathogenicity, required for optimal virus replication. Alters numerous pathways of T-lymphocyte function and down-regulates immunity surface molecules in order to evade host defense and increase viral infectivity. Alters the functionality of other immunity cells, like dendritic cells, monocytes/macrophages and NK cells. One of the earliest and most abundantly expressed viral proteins. In terms of biological role, in infected CD4(+) T-lymphocytes, down-regulates the surface MHC-I, mature MHC-II, CD4, CD28 and probably other immunity surface molecules. In consequence infected cells are masked for immune recognition by cytotoxic T-lymphocytes. Decreasing the number of immune receptors also prevents reinfection by more HIV particles (superinfection). Bypasses host T-cell signaling by inducing a transcriptional program nearly identical to that of anti-CD3 cell activation. Interaction with TCR-zeta chain up-regulates the Fas ligand (FasL). Increasing surface FasL molecules and decreasing surface MHC-I molecules on infected CD4(+) cells send attacking cytotoxic CD8+ T-lymphocytes into apoptosis. Functionally, plays a role in optimizing the host cell environment for viral replication without causing cell death by apoptosis. Protects the infected cells from apoptosis in order to keep them alive until the next virus generation is ready to strike. The chain is Protein Nef from Pan troglodytes (Chimpanzee).